The following is a 61-amino-acid chain: Metallothionein-II, hippocampal (61 aa).

An N-acetylmethionine modification is found at Met1. The segment at Met1–Cys29 is beta. 20 residues coordinate a divalent metal cation: Cys5, Cys7, Cys13, Cys15, Cys19, Cys21, Cys24, Cys26, Cys29, Cys33, Cys34, Cys36, Cys37, Cys41, Cys44, Cys48, Cys50, Cys57, Cys59, and Cys60. Residues Lys30 to Ala61 are alpha.

The protein belongs to the metallothionein superfamily. Type 1 family.

In terms of biological role, metallothioneins have a high content of cysteine residues that bind various heavy metals; these proteins are transcriptionally regulated by both heavy metals and glucocorticoids. This isoform may play a role in regulating the transport, accumulation, and compartmentation of zinc in the hippocampus. The chain is Metallothionein-II, hippocampal from Bos taurus (Bovine).